Here is a 377-residue protein sequence, read N- to C-terminus: Cilia- and flagella-associated protein 263 (377 aa).

Coiled-coil stretches lie at residues 95-243 (LTAD…NQEL) and 280-354 (LRKE…SLKG).

The protein belongs to the CFAP263 family. In terms of assembly, forms a complex with CFAP184; the interaction is required for functional activity in cilia. Interacts with HAP1 and PCM1.

It is found in the cytoplasm. It localises to the cytoskeleton. Its subcellular location is the microtubule organizing center. The protein localises to the centrosome. The protein resides in the centriolar satellite. It is found in the cell projection. It localises to the cilium. In terms of biological role, component of centriolar satellites contributing to primary cilium formation. In complex with CFAP263, acts as a regulator of ciliary beating that connects radial spoke 3 (RS3) to the inner dynein arm (IDA) and the nexin-dynein regulatory complex (N-DRC). The complex is positioned parallel to N-DRC and forms a connection between the arch at the base of RS3, the IDA tail and N-DRC. The chain is Cilia- and flagella-associated protein 263 from Homo sapiens (Human).